The primary structure comprises 192 residues: MLLTIKCAQNVIKPNCQKVANLLASSRRAGLFPTTATTATSRSLSQISVLYSPAAREAARAATGGSANLRRIHNTPTTEATATAITAKKRKMVVRLNEQERAEKLQPLLDAGWTLVEGRDAIFKQFVLKDFNQAFSFMTGVALLAEKINHHPEWFNCYNKVDVTLSTHDVGGLSSQDIRMATHLETTANLLK.

It belongs to the pterin-4-alpha-carbinolamine dehydratase family.

The catalysed reaction is (4aS,6R)-4a-hydroxy-L-erythro-5,6,7,8-tetrahydrobiopterin = (6R)-L-erythro-6,7-dihydrobiopterin + H2O. The chain is Pterin-4-alpha-carbinolamine dehydratase (Pcd) from Drosophila melanogaster (Fruit fly).